A 103-amino-acid chain; its full sequence is MRQRLLPSVTSLLLVALLFPGSSQARHVNHSATEALGELRERAPGQGTNGFQLLRHAVKRDLLPPRTPPYQVHISHQEARGPSFKICVGFLGPRWARGCSTGN.

Positions Met-1–Gln-24 are cleaved as a signal peptide. An N-linked (GlcNAc...) asparagine glycan is attached at Asn-29.

Belongs to the SPAG11 family.

Its subcellular location is the secreted. In terms of biological role, has antimicrobial activity against E.coli. Plays a role in the defense response in the male reproductive tract, contributing to sperm maturation, storage and protection. The chain is Sperm-associated antigen 11A from Pan troglodytes (Chimpanzee).